A 160-amino-acid chain; its full sequence is Cyanate hydratase (160 aa).

Catalysis depends on residues Arg100, Glu103, and Ser126.

Belongs to the cyanase family.

The catalysed reaction is cyanate + hydrogencarbonate + 3 H(+) = NH4(+) + 2 CO2. Catalyzes the reaction of cyanate with bicarbonate to produce ammonia and carbon dioxide. This Penicillium rubens (strain ATCC 28089 / DSM 1075 / NRRL 1951 / Wisconsin 54-1255) (Penicillium chrysogenum) protein is Cyanate hydratase.